Consider the following 190-residue polypeptide: Xanthine phosphoribosyltransferase 2 (190 aa).

Xanthine is bound by residues L20 and N27. Residue 129 to 133 (ANGCA) participates in 5-phospho-alpha-D-ribose 1-diphosphate binding. Residue K157 coordinates xanthine.

Belongs to the purine/pyrimidine phosphoribosyltransferase family. Xpt subfamily. As to quaternary structure, homodimer.

The protein localises to the cytoplasm. It carries out the reaction XMP + diphosphate = xanthine + 5-phospho-alpha-D-ribose 1-diphosphate. Its pathway is purine metabolism; XMP biosynthesis via salvage pathway; XMP from xanthine: step 1/1. Converts the preformed base xanthine, a product of nucleic acid breakdown, to xanthosine 5'-monophosphate (XMP), so it can be reused for RNA or DNA synthesis. This Clostridium botulinum (strain ATCC 19397 / Type A) protein is Xanthine phosphoribosyltransferase 2.